A 234-amino-acid chain; its full sequence is Synaptogyrin-1 (234 aa).

Met1 bears the N-acetylmethionine mark. Topologically, residues 1-23 are cytoplasmic; it reads MEGGAYGAGKAGGAFDPYTLVRQ. The region spanning 20 to 173 is the MARVEL domain; the sequence is LVRQPHTILR…QAVLAFQRYQ (154 aa). A helical membrane pass occupies residues 24–44; the sequence is PHTILRVVSWVFSIVVFGSIV. Topologically, residues 45 to 71 are lumenal; sequence NEGYLNNPEEEEEFCIYNRNPNACSYG. The helical transmembrane segment at 72–92 threads the bilayer; sequence VTVGVLAFLTCLLYLALDVYF. Topologically, residues 93–103 are cytoplasmic; it reads PQISSVKDRKK. A helical membrane pass occupies residues 104-124; the sequence is AVLSDIGVSAFWAFFWFVGFC. Over 125–148 the chain is Lumenal; it reads FLANQWQVSKPKDNPLNEGTDAAR. Residues 149 to 169 form a helical membrane-spanning segment; that stretch reads AAIAFSFFSIFTWAGQAVLAF. The Cytoplasmic segment spans residues 170–234; that stretch reads QRYQIGADSA…EPQGYQSQGY (65 aa). A disordered region spans residues 201–234; sequence EPSAGSDPAGMGGTYQHPANAFDAEPQGYQSQGY.

The protein belongs to the synaptogyrin family.

It localises to the cytoplasmic vesicle. Its subcellular location is the secretory vesicle. The protein resides in the synaptic vesicle membrane. It is found in the melanosome. Its function is as follows. May play a role in regulated exocytosis. Modulates the localization of synaptophysin/SYP into synaptic-like microvesicles and may therefore play a role in synaptic-like microvesicle formation and/or maturation. Involved in the regulation of short-term and long-term synaptic plasticity. The sequence is that of Synaptogyrin-1 from Mus musculus (Mouse).